The primary structure comprises 421 residues: Tyrosine-protein phosphatase non-receptor type 20 (421 aa).

Residues 1–58 (MSSPGNVRQKHGRDNDEHEGDSDDLNLQKSLPSSSQQKTPTKPVFGNKVNSESVKTSH) form a disordered region. A compositionally biased stretch (low complexity) spans 27 to 41 (LQKSLPSSSQQKTPT). Polar residues predominate over residues 48 to 58 (KVNSESVKTSH). A Phosphoserine modification is found at serine 76. The segment at 93 to 116 (RWSSVDPESAGPSKTVSTVLSESS) is disordered. The span at 104-116 (PSKTVSTVLSESS) shows a compositional bias: polar residues. The residue at position 122 (serine 122) is a Phosphoserine. Positions 160 to 413 (IIREFLELEE…QFCYEIVLEV (254 aa)) constitute a Tyrosine-protein phosphatase domain. Substrate contacts are provided by residues aspartate 324, 354–360 (CSAGVGR), and glutamine 398. Cysteine 354 (phosphocysteine intermediate) is an active-site residue.

This sequence belongs to the protein-tyrosine phosphatase family. Non-receptor class subfamily.

The protein localises to the nucleus. It is found in the cytoplasm. The protein resides in the cytoskeleton. Its subcellular location is the microtubule organizing center. It localises to the centrosome. The enzyme catalyses O-phospho-L-tyrosyl-[protein] + H2O = L-tyrosyl-[protein] + phosphate. Tyrosine-protein phosphatase targeted to sites of actin polymerization in response of varied extracellular stimuli. Has tyrosine phosphatase activity towards various tyrosyl phosphorylated substrates. This Rattus norvegicus (Rat) protein is Tyrosine-protein phosphatase non-receptor type 20 (Ptpn20).